The following is a 207-amino-acid chain: Histidine biosynthesis bifunctional protein HisIE (207 aa).

Positions 1–117 are phosphoribosyl-AMP cyclohydrolase; that stretch reads MSLVTTINWE…GKQEQPALVF (117 aa). The tract at residues 118–207 is phosphoribosyl-ATP pyrophosphohydrolase; sequence LHQLEQVLAN…TEKLQERHNK (90 aa).

In the N-terminal section; belongs to the PRA-CH family. It in the C-terminal section; belongs to the PRA-PH family.

The protein localises to the cytoplasm. The enzyme catalyses 1-(5-phospho-beta-D-ribosyl)-ATP + H2O = 1-(5-phospho-beta-D-ribosyl)-5'-AMP + diphosphate + H(+). It carries out the reaction 1-(5-phospho-beta-D-ribosyl)-5'-AMP + H2O = 1-(5-phospho-beta-D-ribosyl)-5-[(5-phospho-beta-D-ribosylamino)methylideneamino]imidazole-4-carboxamide. It functions in the pathway amino-acid biosynthesis; L-histidine biosynthesis; L-histidine from 5-phospho-alpha-D-ribose 1-diphosphate: step 2/9. The protein operates within amino-acid biosynthesis; L-histidine biosynthesis; L-histidine from 5-phospho-alpha-D-ribose 1-diphosphate: step 3/9. This Photobacterium profundum (strain SS9) protein is Histidine biosynthesis bifunctional protein HisIE.